We begin with the raw amino-acid sequence, 157 residues long: Protein AE7 (157 aa).

This sequence belongs to the MIP18 family. As to quaternary structure, part of a complex formed of AE7, CIA1, MMS19 and NAR1. Interacts with CIA1 and MMS19, but not with NAR1. In terms of tissue distribution, expressed in the embryo, shoot apical meristem, leaf primordia, inflorescence and all floral organs.

The protein resides in the nucleus. It localises to the cytoplasm. In terms of biological role, central member of the cytosolic iron-sulfur (Fe-S) protein assembly (CIA) pathway. Involved in leaf polarity formation. Promotes leaf adaxial identity. May play a role in the cell cycle progression and is required for cell proliferation. The sequence is that of Protein AE7 from Arabidopsis thaliana (Mouse-ear cress).